We begin with the raw amino-acid sequence, 339 residues long: Formyl peptide receptor-related sequence 6 (339 aa).

Topologically, residues 1–23 are extracellular; the sequence is MEANFSIPQNGSEVVFYDSTTSR. Asparagine 4 and asparagine 10 each carry an N-linked (GlcNAc...) asparagine glycan. Residues 24-44 traverse the membrane as a helical segment; that stretch reads VICIFLVVVLSITFLLGVIGN. The Cytoplasmic segment spans residues 45–62; sequence GLVIYVAGFRMTHTVTTI. A helical membrane pass occupies residues 63-85; sequence CYLNLALSDFSYMASLPFQITSI. Residues 86–99 are Extracellular-facing; the sequence is VMNGEWLFGWFLCK. Residues cysteine 98 and cysteine 178 are joined by a disulfide bond. A helical membrane pass occupies residues 100–120; sequence FVHMIINVNLFLSIFLITFIA. Residues 121–144 lie on the Cytoplasmic side of the membrane; sequence MDRCICVLHPVWAQNHRTVNVATK. Residues 145-165 traverse the membrane as a helical segment; sequence VIFGAWILVLMLIFPHCIFVT. Topologically, residues 166–198 are extracellular; the sequence is TVKDESGKVHCICNFESWAATPEEQVKVSMTVS. The helical transmembrane segment at 199–219 threads the bilayer; that stretch reads LISVTISFIIGFSIPMIFIVI. Over 220–241 the chain is Cytoplasmic; it reads CYGLMAAKIGRRGFVNSSRPLR. Residues 242–262 traverse the membrane as a helical segment; that stretch reads VLTAVAISFFVCWFPFQLIFL. The Extracellular segment spans residues 263-280; it reads LGNIGNKETQNNIDTWVN. The helical transmembrane segment at 281–301 threads the bilayer; it reads TASTLASFNSCLNPILYVFLG. At 302–339 the chain is on the cytoplasmic side; that stretch reads QQFRERLIYSLSASLERALREDSALNSDKTRNLSSQRL.

Belongs to the G-protein coupled receptor 1 family. As to expression, expressed exclusively in vomeronasal tissue. Expressed in 1.2 % of a subset of sensory neurons located in the apical layer of the vomeronasal organ. Each neuron appears to express only one receptor gene. Expressed in brain, spleen, skeletal muscle and at high level in testis.

The protein resides in the membrane. May have an olfactory function associated with the identification of pathogens or of pathogenic states. This is Formyl peptide receptor-related sequence 6 (Fpr-rs6) from Mus musculus (Mouse).